We begin with the raw amino-acid sequence, 400 residues long: Spermatogenic leucine zipper protein 1 (400 aa).

A disordered region spans residues 1-27 (MADSDSSSEMPAHSPSPSPIPCAKQKP). Serine 106 carries the post-translational modification Phosphoserine. Residues 116–127 (RNKLRFKDDLFI) form a helix-loop-helix motif region. The interval 128–193 (HFDPERENTM…HIRGEYRKLR (66 aa)) is basic motif. 2 coiled-coil regions span residues 182 to 231 (SVHI…KDIV) and 268 to 293 (LIAALLENECQILQQRVDILRELHLH). Residue serine 207 is modified to Phosphoserine. Residues 252-273 (LEEQVKKLSQDTHSLHLIAALL) are leucine-zipper. Positions 295–332 (AGPGHEKPLQTSGEQDKKCGEQDKKCGEQDKKCGEQDK) are disordered.

Interacts with PPP1CC isoform gamma-2. In terms of processing, phosphorylated by MAPK1/ERK2 and MAPK3/ERK1.

The protein localises to the cytoplasm. The protein resides in the nucleus. Its function is as follows. Transcription factor that binds to the DNA sequence 5'-CANNTG-3'(E box) and the G-box motif. May play an important role in the regulation of cell proliferation and differentiation during spermatogenesis. This chain is Spermatogenic leucine zipper protein 1 (Spz1), found in Rattus norvegicus (Rat).